Here is a 383-residue protein sequence, read N- to C-terminus: Ribosomal RNA large subunit methyltransferase G (383 aa).

The protein belongs to the methyltransferase superfamily. RlmG family.

The protein localises to the cytoplasm. It catalyses the reaction guanosine(1835) in 23S rRNA + S-adenosyl-L-methionine = N(2)-methylguanosine(1835) in 23S rRNA + S-adenosyl-L-homocysteine + H(+). Functionally, specifically methylates the guanine in position 1835 (m2G1835) of 23S rRNA. The protein is Ribosomal RNA large subunit methyltransferase G of Shewanella denitrificans (strain OS217 / ATCC BAA-1090 / DSM 15013).